The primary structure comprises 368 residues: Zinc finger protein 24 (368 aa).

K22 is covalently cross-linked (Glycyl lysine isopeptide (Lys-Gly) (interchain with G-Cter in SUMO2)). K27 participates in a covalent cross-link: Glycyl lysine isopeptide (Lys-Gly) (interchain with G-Cter in SUMO1); alternate. K27 participates in a covalent cross-link: Glycyl lysine isopeptide (Lys-Gly) (interchain with G-Cter in SUMO2); alternate. Positions 52 to 134 (RQRFRQFGYQ…AVLEDLESEL (83 aa)) constitute an SCAN box domain. Phosphoserine is present on residues S132 and S142. Glycyl lysine isopeptide (Lys-Gly) (interchain with G-Cter in SUMO2) cross-links involve residues K147, K177, and K236. The C2H2-type 1 zinc-finger motif lies at 251-273 (HICDECGKHFSQGSALILHQRIH). A necessary and sufficient for nuclear localization region spans residues 251 to 301 (HICDECGKHFSQGSALILHQRIHSGEKPYGCVECGKAFSRSSILVQHQRVH). S274 carries the phosphoserine modification. Residues K277 and K286 each participate in a glycyl lysine isopeptide (Lys-Gly) (interchain with G-Cter in SUMO2) cross-link. 3 C2H2-type zinc fingers span residues 279–301 (YGCV…QRVH), 307–329 (YKCL…QRIH), and 335–357 (YECV…QRRH). The residue at position 292 (S292) is a Phosphoserine. At Y335 the chain carries Phosphotyrosine. Glycyl lysine isopeptide (Lys-Gly) (interchain with G-Cter in SUMO2) cross-links involve residues K361 and K367.

Belongs to the krueppel C2H2-type zinc-finger protein family. Sumoylated. As to expression, widely expressed with highest levels in heart, brain, liver, skeletal muscle, kidney and testis and very low levels in spleen and lung.

The protein localises to the nucleus. In terms of biological role, transcription factor required for myelination of differentiated oligodendrocytes. Required for the conversion of oligodendrocytes from the premyelinating to the myelinating state. In the developing central nervous system (CNS), involved in the maintenance in the progenitor stage by promoting the cell cycle. Specifically binds to the 5'-TCAT-3' DNA sequence. Has transcription repressor activity in vitro. The sequence is that of Zinc finger protein 24 from Mus musculus (Mouse).